Consider the following 359-residue polypeptide: UDP-2-acetamido-2-deoxy-3-oxo-D-glucuronate aminotransferase (359 aa).

UDP-2-acetamido-2-deoxy-alpha-D-ribo-hex-3-uluronate contacts are provided by Gly29, Tyr31, and Ser184. Residue Lys185 is modified to N6-(pyridoxal phosphate)lysine. Residues Arg229, His308, and Tyr309 each coordinate UDP-2-acetamido-2-deoxy-alpha-D-ribo-hex-3-uluronate.

It belongs to the DegT/DnrJ/EryC1 family. Homodimer. Requires pyridoxal 5'-phosphate as cofactor.

It catalyses the reaction UDP-2-acetamido-2-deoxy-alpha-D-ribo-hex-3-uluronate + L-glutamate = UDP-2-acetamido-3-amino-2,3-dideoxy-alpha-D-glucuronate + 2-oxoglutarate. The protein operates within bacterial outer membrane biogenesis; LPS O-antigen biosynthesis. Functionally, plays a role in the biosynthesis of B-band O antigen for serotype O5. Catalyzes the amination of UDP-2-acetamido-2-deoxy-3-oxo-D-glucuronic acid (UDP-3-oxo-D-GlcNAcA) to UDP-2-acetamido-3-amino-2,3-dideoxy-D-glucuronic acid (UDP-GlcNAc3NA), using L-glutamate as the preferred amine donor. This is UDP-2-acetamido-2-deoxy-3-oxo-D-glucuronate aminotransferase from Pseudomonas aeruginosa (strain ATCC 15692 / DSM 22644 / CIP 104116 / JCM 14847 / LMG 12228 / 1C / PRS 101 / PAO1).